A 370-amino-acid chain; its full sequence is ABSCISIC ACID-INSENSITIVE 5-like protein 8 (370 aa).

Residues S25, S44, and S69 each carry the phosphoserine modification. Residues 56 to 77 (SAEETQEGSQRQGSTTLPPTLS) are disordered. Positions 62–77 (EGSQRQGSTTLPPTLS) are enriched in polar residues. Residue T111 is modified to Phosphothreonine. Residues 260 to 278 (ESSLLSPSPYISNGSTSTR) show a composition bias toward polar residues. A disordered region spans residues 260–281 (ESSLLSPSPYISNGSTSTRGGK). One can recognise a bZIP domain in the interval 293–356 (VDKKLRRKIK…MEPGMISLHE (64 aa)). Residues 295 to 314 (KKLRRKIKNRESAARSRARK) form a basic motif region. Positions 328–342 (LKKDYEELLKQHVEL) are leucine-zipper. Residues 349–370 (PGMISLHERPERKLRRTKSDIK) are disordered. Residues 354–370 (LHERPERKLRRTKSDIK) show a composition bias toward basic and acidic residues.

It belongs to the bZIP family. ABI5 subfamily. DNA-binding heterodimer.

It is found in the nucleus. Its function is as follows. Could participate in abscisic acid-regulated gene expression. The chain is ABSCISIC ACID-INSENSITIVE 5-like protein 8 (BZIP15) from Arabidopsis thaliana (Mouse-ear cress).